The sequence spans 256 residues: Large ribosomal subunit protein eL8B (256 aa).

Positions 1-37 (MAPGKKVAPAPFGAKSTKSNKAKNPLTHSTPKNFGIG) are disordered.

This sequence belongs to the eukaryotic ribosomal protein eL8 family. In terms of assembly, component of the large ribosomal subunit (LSU). Mature yeast ribosomes consist of a small (40S) and a large (60S) subunit. The 40S small subunit contains 1 molecule of ribosomal RNA (18S rRNA) and 33 different proteins (encoded by 57 genes). The large 60S subunit contains 3 rRNA molecules (25S, 5.8S and 5S rRNA) and 46 different proteins (encoded by 81 genes).

It is found in the cytoplasm. Functionally, component of the ribosome, a large ribonucleoprotein complex responsible for the synthesis of proteins in the cell. The small ribosomal subunit (SSU) binds messenger RNAs (mRNAs) and translates the encoded message by selecting cognate aminoacyl-transfer RNA (tRNA) molecules. The large subunit (LSU) contains the ribosomal catalytic site termed the peptidyl transferase center (PTC), which catalyzes the formation of peptide bonds, thereby polymerizing the amino acids delivered by tRNAs into a polypeptide chain. The nascent polypeptides leave the ribosome through a tunnel in the LSU and interact with protein factors that function in enzymatic processing, targeting, and the membrane insertion of nascent chains at the exit of the ribosomal tunnel. The protein is Large ribosomal subunit protein eL8B of Saccharomyces cerevisiae (strain ATCC 204508 / S288c) (Baker's yeast).